Consider the following 245-residue polypeptide: Probable 2-phosphosulfolactate phosphatase (245 aa).

This sequence belongs to the ComB family. The cofactor is Mg(2+).

The catalysed reaction is (2R)-O-phospho-3-sulfolactate + H2O = (2R)-3-sulfolactate + phosphate. The sequence is that of Probable 2-phosphosulfolactate phosphatase from Nostoc sp. (strain PCC 7120 / SAG 25.82 / UTEX 2576).